The primary structure comprises 20 residues: Apidaecin 1+ (20 aa).

The tract at residues 1–20 is disordered; the sequence is GKPNRPRPAPIQPRPPHPRL.

Belongs to the apidaecin family.

The protein resides in the secreted. Its function is as follows. Antimicrobial peptide active against many Gram-negative enterobacterial and plant-associated bacterial species. Not active against other bacterial species like H.pylori, P.mirabilis, B.pertussis or N.gonorrhoeae. In terms of biological role, among others, also active against C.jejuni and L.pneumophila but not against Y.enterocolitica. Functionally, among others, also active against Y.enterocolitica butnot against L.pneumophila and C.jejuni. In Pimpla disparis (Parasitic wasp), this protein is Apidaecin 1+.